A 443-amino-acid chain; its full sequence is Chromosome partition protein MukF (443 aa).

The segment at 209–237 (LDETSGNLRELQDTLNAAGDKLQAQLLRI) is leucine-zipper.

It belongs to the MukF family. As to quaternary structure, interacts, and probably forms a ternary complex, with MukE and MukB via its C-terminal region. The complex formation is stimulated by calcium or magnesium. It is required for an interaction between MukE and MukB.

The protein localises to the cytoplasm. The protein resides in the nucleoid. Its function is as follows. Involved in chromosome condensation, segregation and cell cycle progression. May participate in facilitating chromosome segregation by condensation DNA from both sides of a centrally located replisome during cell division. Not required for mini-F plasmid partitioning. Probably acts via its interaction with MukB and MukE. Overexpression results in anucleate cells. It has a calcium binding activity. This is Chromosome partition protein MukF from Actinobacillus pleuropneumoniae serotype 3 (strain JL03).